A 130-amino-acid polypeptide reads, in one-letter code: Glycine cleavage system H protein (130 aa).

Residues 24–106 (EYTVGITEHA…YHEGWLFRIK (83 aa)) enclose the Lipoyl-binding domain. K65 is modified (N6-lipoyllysine).

Belongs to the GcvH family. In terms of assembly, the glycine cleavage system is composed of four proteins: P, T, L and H. It depends on (R)-lipoate as a cofactor.

In terms of biological role, the glycine cleavage system catalyzes the degradation of glycine. The H protein shuttles the methylamine group of glycine from the P protein to the T protein. This chain is Glycine cleavage system H protein, found in Photorhabdus laumondii subsp. laumondii (strain DSM 15139 / CIP 105565 / TT01) (Photorhabdus luminescens subsp. laumondii).